The sequence spans 388 residues: Succinate--CoA ligase [ADP-forming] subunit beta (388 aa).

The 236-residue stretch at 9 to 244 (KEILRKYNVP…LDEEDANEIE (236 aa)) folds into the ATP-grasp domain. ATP-binding positions include lysine 46, 53 to 55 (GRG), glutamate 99, alanine 102, and glutamate 107. Asparagine 199 and aspartate 213 together coordinate Mg(2+). Substrate-binding positions include asparagine 264 and 321-323 (GIM).

This sequence belongs to the succinate/malate CoA ligase beta subunit family. Heterotetramer of two alpha and two beta subunits. The cofactor is Mg(2+).

It carries out the reaction succinate + ATP + CoA = succinyl-CoA + ADP + phosphate. The enzyme catalyses GTP + succinate + CoA = succinyl-CoA + GDP + phosphate. It participates in carbohydrate metabolism; tricarboxylic acid cycle; succinate from succinyl-CoA (ligase route): step 1/1. Functionally, succinyl-CoA synthetase functions in the citric acid cycle (TCA), coupling the hydrolysis of succinyl-CoA to the synthesis of either ATP or GTP and thus represents the only step of substrate-level phosphorylation in the TCA. The beta subunit provides nucleotide specificity of the enzyme and binds the substrate succinate, while the binding sites for coenzyme A and phosphate are found in the alpha subunit. This Ralstonia nicotianae (strain ATCC BAA-1114 / GMI1000) (Ralstonia solanacearum) protein is Succinate--CoA ligase [ADP-forming] subunit beta.